A 501-amino-acid polypeptide reads, in one-letter code: Probable pectate lyase 13 (501 aa).

A signal peptide spans Met-1–Ala-22. Asn-27 and Asn-49 each carry an N-linked (GlcNAc...) asparagine glycan. Positions Arg-55–Gly-78 are disordered. Residues Ser-58–Ser-74 are compositionally biased toward low complexity. Asp-217, Asp-241, and Asp-245 together coordinate Ca(2+). Arg-297 is a catalytic residue. Disordered stretches follow at residues Ile-329 to Trp-359 and Asn-408 to Asp-463. Residues Ser-343–Gly-357 are compositionally biased toward basic and acidic residues. Positions Gly-430–Val-449 are enriched in gly residues. A compositionally biased stretch (low complexity) spans Met-450–Asp-463. Ser-474 carries GPI-anchor amidated serine lipidation. Residues Asp-475–Leu-501 constitute a propeptide, removed in mature form.

This sequence belongs to the polysaccharide lyase 1 family. The cofactor is Ca(2+). Expressed equally in mature leaves, buds, flowers, rosettes and roots.

Its subcellular location is the cell membrane. It catalyses the reaction Eliminative cleavage of (1-&gt;4)-alpha-D-galacturonan to give oligosaccharides with 4-deoxy-alpha-D-galact-4-enuronosyl groups at their non-reducing ends.. The protein operates within glycan metabolism; pectin degradation; 2-dehydro-3-deoxy-D-gluconate from pectin: step 2/5. Functionally, susceptibility factor required for infection by most powdery mildews, but not by unrelated pathogens. Exact function not known, but clearly affects cell wall composition. The polypeptide is Probable pectate lyase 13 (PMR6) (Arabidopsis thaliana (Mouse-ear cress)).